We begin with the raw amino-acid sequence, 363 residues long: Putative transcriptional activator MSA2 (363 aa).

The interval 1–20 (MVYTTPQQQQRFSSTPQSSH) is disordered. Phosphoserine is present on residues serine 157 and serine 292.

As to quaternary structure, interacts with transcription complexes SCB-binding factor (SBF) and MCB-binding factor (MBF). Interacts with SWI4.

The chain is Putative transcriptional activator MSA2 (MSA2) from Saccharomyces cerevisiae (strain ATCC 204508 / S288c) (Baker's yeast).